The chain runs to 90 residues: U7-theraphotoxin-Hhn1e (90 aa).

The signal sequence occupies residues 1-19 (MKTAIFTVVLALAVFAVLS). The propeptide occupies 20 to 50 (FGWEANEKALSEEFTELIHEKEAASETEARE). 3 disulfides stabilise this stretch: Cys-51/Cys-65, Cys-58/Cys-70, and Cys-64/Cys-81.

Belongs to the neurotoxin 10 (Hwtx-1) family. 13 (Hntx-13) subfamily. Expressed by the venom gland.

The protein resides in the secreted. Functionally, ion channel inhibitor. The chain is U7-theraphotoxin-Hhn1e from Cyriopagopus hainanus (Chinese bird spider).